We begin with the raw amino-acid sequence, 151 residues long: Large ribosomal subunit protein uL13 (151 aa).

Belongs to the universal ribosomal protein uL13 family. Part of the 50S ribosomal subunit.

Functionally, this protein is one of the early assembly proteins of the 50S ribosomal subunit, although it is not seen to bind rRNA by itself. It is important during the early stages of 50S assembly. In Acaryochloris marina (strain MBIC 11017), this protein is Large ribosomal subunit protein uL13.